A 240-amino-acid chain; its full sequence is 4-hydroxy-tetrahydrodipicolinate reductase (240 aa).

7 to 12 serves as a coordination point for NAD(+); that stretch reads GLSGTM. K35 contributes to the NADP(+) binding site. Residues 74–76 and 98–101 each bind NAD(+); these read GTT and ATNM. Residue H131 is the Proton donor/acceptor of the active site. H132 lines the (S)-2,3,4,5-tetrahydrodipicolinate pocket. K135 functions as the Proton donor in the catalytic mechanism. 141–142 contributes to the (S)-2,3,4,5-tetrahydrodipicolinate binding site; that stretch reads GS.

It belongs to the DapB family.

The protein localises to the cytoplasm. The enzyme catalyses (S)-2,3,4,5-tetrahydrodipicolinate + NAD(+) + H2O = (2S,4S)-4-hydroxy-2,3,4,5-tetrahydrodipicolinate + NADH + H(+). It catalyses the reaction (S)-2,3,4,5-tetrahydrodipicolinate + NADP(+) + H2O = (2S,4S)-4-hydroxy-2,3,4,5-tetrahydrodipicolinate + NADPH + H(+). It participates in amino-acid biosynthesis; L-lysine biosynthesis via DAP pathway; (S)-tetrahydrodipicolinate from L-aspartate: step 4/4. Functionally, catalyzes the conversion of 4-hydroxy-tetrahydrodipicolinate (HTPA) to tetrahydrodipicolinate. The protein is 4-hydroxy-tetrahydrodipicolinate reductase of Alkaliphilus metalliredigens (strain QYMF).